The sequence spans 334 residues: rRNA 2'-O-methyltransferase fibrillarin (334 aa).

The span at 1–93 (MEGRGGSRGG…GGKPAAGGKP (93 aa)) shows a compositional bias: gly residues. Residues 1 to 94 (MEGRGGSRGG…GKPAAGGKPG (94 aa)) form a disordered region. S-adenosyl-L-methionine is bound by residues 184–185 (TT), 203–204 (EL), 228–229 (DA), and 248–251 (DVAQ).

The protein belongs to the methyltransferase superfamily. Fibrillarin family. In terms of assembly, component of box C/D small nucleolar ribonucleoprotein (snoRNP) particles. It is associated with the U3, U8 and U13 small nuclear RNAs. Part of the small subunit (SSU) processome, composed of more than 70 proteins and the RNA chaperone small nucleolar RNA (snoRNA) U3. By homology to other fibrillarins, some or all of the N-terminal domain arginines are modified to asymmetric dimethylarginine (DMA).

The protein localises to the nucleus. Its subcellular location is the nucleolus. It catalyses the reaction L-glutaminyl-[histone H2A] + S-adenosyl-L-methionine = N(5)-methyl-L-glutaminyl-[histone H2A] + S-adenosyl-L-homocysteine + H(+). Its function is as follows. S-adenosyl-L-methionine-dependent methyltransferase that has the ability to methylate both RNAs and proteins. Involved in pre-rRNA processing. Utilizes the methyl donor S-adenosyl-L-methionine to catalyze the site-specific 2'-hydroxyl methylation of ribose moieties in pre-ribosomal RNA. Site specificity is provided by a guide RNA that base pairs with the substrate. Methylation occurs at a characteristic distance from the sequence involved in base pairing with the guide RNA. Also acts as a protein methyltransferase by mediating methylation of 'Gln-105' of histone H2A (H2AQ105me), a modification that impairs binding of the FACT complex and is specifically present at 35S ribosomal DNA locus. Part of the small subunit (SSU) processome, first precursor of the small eukaryotic ribosomal subunit. During the assembly of the SSU processome in the nucleolus, many ribosome biogenesis factors, an RNA chaperone and ribosomal proteins associate with the nascent pre-rRNA and work in concert to generate RNA folding, modifications, rearrangements and cleavage as well as targeted degradation of pre-ribosomal RNA by the RNA exosome. The protein is rRNA 2'-O-methyltransferase fibrillarin (fbl) of Dictyostelium discoideum (Social amoeba).